A 544-amino-acid polypeptide reads, in one-letter code: Probable protein kinase UbiB (544 aa).

The region spanning 123–501 (DFDIKPLASA…KRQQAKGQFL (379 aa)) is the Protein kinase domain. Residues 129 to 137 (LASASIAQV) and lysine 152 each bind ATP. The active-site Proton acceptor is aspartate 287. The chain crosses the membrane as a helical span at residues 515–537 (LLTSNITVLASISAATGAAFWLF).

This sequence belongs to the ABC1 family. UbiB subfamily.

Its subcellular location is the cell inner membrane. It participates in cofactor biosynthesis; ubiquinone biosynthesis [regulation]. Functionally, is probably a protein kinase regulator of UbiI activity which is involved in aerobic coenzyme Q (ubiquinone) biosynthesis. The sequence is that of Probable protein kinase UbiB from Aliivibrio fischeri (strain MJ11) (Vibrio fischeri).